Here is a 656-residue protein sequence, read N- to C-terminus: UvrABC system protein C (656 aa).

A GIY-YIG domain is found at 41–120; the sequence is KSSGCYLFKD…IKTNKPYFNI (80 aa). The region spanning 230 to 265 is the UVR domain; sequence DDLEVFLERKMNQYSNDLEFENAAKIRDQISGLKLL.

The protein belongs to the UvrC family. In terms of assembly, interacts with UvrB in an incision complex.

The protein localises to the cytoplasm. The UvrABC repair system catalyzes the recognition and processing of DNA lesions. UvrC both incises the 5' and 3' sides of the lesion. The N-terminal half is responsible for the 3' incision and the C-terminal half is responsible for the 5' incision. The chain is UvrABC system protein C from Prochlorococcus marinus subsp. pastoris (strain CCMP1986 / NIES-2087 / MED4).